We begin with the raw amino-acid sequence, 503 residues long: Arabinose import ATP-binding protein AraG 1 (503 aa).

ABC transporter domains follow at residues 5–240 (LRFD…MVGR) and 253–497 (LGDV…LPQG). 37–44 (GENGAGKS) contributes to the ATP binding site.

It belongs to the ABC transporter superfamily. Arabinose importer (TC 3.A.1.2.2) family. In terms of assembly, the complex is composed of two ATP-binding proteins (AraG), two transmembrane proteins (AraH) and a solute-binding protein (AraF).

The protein resides in the cell inner membrane. It catalyses the reaction L-arabinose(out) + ATP + H2O = L-arabinose(in) + ADP + phosphate + H(+). Functionally, part of the ABC transporter complex AraFGH involved in arabinose import. Responsible for energy coupling to the transport system. This is Arabinose import ATP-binding protein AraG 1 from Burkholderia thailandensis (strain ATCC 700388 / DSM 13276 / CCUG 48851 / CIP 106301 / E264).